A 314-amino-acid polypeptide reads, in one-letter code: Taste receptor type 2 member 42 (314 aa).

At 1-7 (MATEMDK) the chain is on the extracellular side. A helical membrane pass occupies residues 8–28 (IFLTLATVEFIIGMLGNVFIG). The Cytoplasmic segment spans residues 29–50 (LVNCSEGIKNQKVFSVDFILTC). A helical membrane pass occupies residues 51 to 71 (LAISTIGHLLVILFDSCVVGL). Residues 72–101 (APHLYATDRVRRPVTMLWHMXNHLTTWLAT) are Extracellular-facing. The chain crosses the membrane as a helical span at residues 102 to 122 (CLSIFYFFKIAHFPHSLFLWL). Residues 123–127 (RWRMN) are Cytoplasmic-facing. The chain crosses the membrane as a helical span at residues 128–148 (RVIAILLTLSLFLLIFDCLVL). Residues 149–187 (EMFIDXSLNIIDKSNLTLYLDESKTPYDKLSLLKILLSL) are Extracellular-facing. The N-linked (GlcNAc...) asparagine glycan is linked to Asn163. A helical membrane pass occupies residues 188–208 (NSFIPFSLCLTSLLFLFLSLV). Over 209–238 (RHTRNLKLSSLGSRDSSTEAHRRAMKMVMS) the chain is Cytoplasmic. The chain crosses the membrane as a helical span at residues 239 to 259 (LLFLFIVHFFSLQVANWTFCI). Residues 260 to 265 (LGNNKY) are Extracellular-facing. A helical membrane pass occupies residues 266 to 286 (TQFVTLALHAFPSCHSFILIL). Residues 287–314 (GNSKLRQTAVRLLWHLRNYTKRPNPLPL) lie on the Cytoplasmic side of the membrane.

The protein belongs to the G-protein coupled receptor T2R family.

It localises to the membrane. Functionally, receptor that may play a role in the perception of bitterness and is gustducin-linked. May play a role in sensing the chemical composition of the gastrointestinal content. The activity of this receptor may stimulate alpha gustducin, mediate PLC-beta-2 activation and lead to the gating of TRPM5. In Macaca mulatta (Rhesus macaque), this protein is Taste receptor type 2 member 42 (TAS2R42).